The following is a 117-amino-acid chain: MIAMPVRMQQGSEGDGGGPSRGTSVITRTKPKTKKPSLYRVLLLNDDYTPMEFVIHILERFFQKNREEATVIMLHVHNHGVGECGVFTYEVAETKVTQVMDFARQHQHPLQCVMEKK.

A disordered region spans residues 1–33 (MIAMPVRMQQGSEGDGGGPSRGTSVITRTKPKT).

The protein belongs to the ClpS family. In terms of assembly, binds to the N-terminal domain of the chaperone ClpA.

Its function is as follows. Involved in the modulation of the specificity of the ClpAP-mediated ATP-dependent protein degradation. The sequence is that of ATP-dependent Clp protease adapter protein ClpS 1 from Rhizobium meliloti (strain 1021) (Ensifer meliloti).